Reading from the N-terminus, the 249-residue chain is MILLISDLHLEEERPDITRAFLDLLHHRARGAQALYILGDFFEAWIGDDGMTPFQRSICAALRELSDSGTPIFIMHGNRDFLIGKAFCKAAGATLLKDPSVVQLHGEPVLLMHGDSLCTRDVGYMKLRRILRNPIVLFILRHLPLRTRHKLARKLRSESRAQTRMKANDIVDVTPEEVPRVMQQFGVRTLVHGHTHRPAIHKLQIGDQAAKRIVLGDWDKQGWALQVDEQGFQLAAFDFVNPQLALPGA.

5 residues coordinate Mn(2+): Asp-7, His-9, Asp-40, Asn-78, and His-113. Residue 78 to 79 (NR) participates in substrate binding. Residues Asp-121, Ser-159, Thr-163, Lys-166, and His-194 each coordinate substrate. Mn(2+) contacts are provided by His-194 and His-196.

This sequence belongs to the LpxH family. Mn(2+) serves as cofactor.

Its subcellular location is the cell inner membrane. It catalyses the reaction UDP-2-N,3-O-bis[(3R)-3-hydroxytetradecanoyl]-alpha-D-glucosamine + H2O = 2-N,3-O-bis[(3R)-3-hydroxytetradecanoyl]-alpha-D-glucosaminyl 1-phosphate + UMP + 2 H(+). The protein operates within glycolipid biosynthesis; lipid IV(A) biosynthesis; lipid IV(A) from (3R)-3-hydroxytetradecanoyl-[acyl-carrier-protein] and UDP-N-acetyl-alpha-D-glucosamine: step 4/6. In terms of biological role, hydrolyzes the pyrophosphate bond of UDP-2,3-diacylglucosamine to yield 2,3-diacylglucosamine 1-phosphate (lipid X) and UMP by catalyzing the attack of water at the alpha-P atom. Involved in the biosynthesis of lipid A, a phosphorylated glycolipid that anchors the lipopolysaccharide to the outer membrane of the cell. This is UDP-2,3-diacylglucosamine hydrolase from Pseudomonas fluorescens (strain SBW25).